A 118-amino-acid chain; its full sequence is Beta-2-microglobulin (118 aa).

Positions 1–20 (MARVVALVLLGLLSLTGLEA) are cleaved as a signal peptide. The region spanning 22-115 (PRVPKVQVYS…LKDPLIVKWD (94 aa)) is the Ig-like C1-type domain. A disulfide bridge connects residues C45 and C99.

Belongs to the beta-2-microglobulin family. In terms of assembly, heterodimer of an alpha chain and a beta chain. Beta-2-microglobulin is the beta-chain of major histocompatibility complex class I molecules.

The protein resides in the secreted. Functionally, component of the class I major histocompatibility complex (MHC). Involved in the presentation of peptide antigens to the immune system. The sequence is that of Beta-2-microglobulin (B2M) from Equus caballus (Horse).